Here is a 263-residue protein sequence, read N- to C-terminus: Phosphatidylserine decarboxylase proenzyme (263 aa).

Residues aspartate 90, histidine 146, and serine 230 each act as charge relay system; for autoendoproteolytic cleavage activity in the active site. Serine 230 acts as the Schiff-base intermediate with substrate; via pyruvic acid; for decarboxylase activity in catalysis. At serine 230 the chain carries Pyruvic acid (Ser); by autocatalysis.

Belongs to the phosphatidylserine decarboxylase family. PSD-B subfamily. Prokaryotic type I sub-subfamily. As to quaternary structure, heterodimer of a large membrane-associated beta subunit and a small pyruvoyl-containing alpha subunit. The cofactor is pyruvate. In terms of processing, is synthesized initially as an inactive proenzyme. Formation of the active enzyme involves a self-maturation process in which the active site pyruvoyl group is generated from an internal serine residue via an autocatalytic post-translational modification. Two non-identical subunits are generated from the proenzyme in this reaction, and the pyruvate is formed at the N-terminus of the alpha chain, which is derived from the carboxyl end of the proenzyme. The autoendoproteolytic cleavage occurs by a canonical serine protease mechanism, in which the side chain hydroxyl group of the serine supplies its oxygen atom to form the C-terminus of the beta chain, while the remainder of the serine residue undergoes an oxidative deamination to produce ammonia and the pyruvoyl prosthetic group on the alpha chain. During this reaction, the Ser that is part of the protease active site of the proenzyme becomes the pyruvoyl prosthetic group, which constitutes an essential element of the active site of the mature decarboxylase.

Its subcellular location is the cell membrane. It catalyses the reaction a 1,2-diacyl-sn-glycero-3-phospho-L-serine + H(+) = a 1,2-diacyl-sn-glycero-3-phosphoethanolamine + CO2. The protein operates within phospholipid metabolism; phosphatidylethanolamine biosynthesis; phosphatidylethanolamine from CDP-diacylglycerol: step 2/2. Functionally, catalyzes the formation of phosphatidylethanolamine (PtdEtn) from phosphatidylserine (PtdSer). In Bacillus subtilis (strain 168), this protein is Phosphatidylserine decarboxylase proenzyme.